Here is a 661-residue protein sequence, read N- to C-terminus: UvrABC system protein C (661 aa).

The GIY-YIG domain maps to 52–130 (HKPGVYRMVD…IKRLHPRFNV (79 aa)). The UVR domain occupies 240 to 275 (QSIKNDMVQAMHKAAKNFDFEQAAAYRDRLSALSHI).

Belongs to the UvrC family. As to quaternary structure, interacts with UvrB in an incision complex.

It localises to the cytoplasm. Functionally, the UvrABC repair system catalyzes the recognition and processing of DNA lesions. UvrC both incises the 5' and 3' sides of the lesion. The N-terminal half is responsible for the 3' incision and the C-terminal half is responsible for the 5' incision. In Bartonella henselae (strain ATCC 49882 / DSM 28221 / CCUG 30454 / Houston 1) (Rochalimaea henselae), this protein is UvrABC system protein C.